Here is a 222-residue protein sequence, read N- to C-terminus: Endonuclease V (222 aa).

The Mg(2+) site is built by Asp-43 and Asp-109.

It belongs to the endonuclease V family. Mg(2+) is required as a cofactor.

The protein localises to the cytoplasm. The enzyme catalyses Endonucleolytic cleavage at apurinic or apyrimidinic sites to products with a 5'-phosphate.. Functionally, DNA repair enzyme involved in the repair of deaminated bases. Selectively cleaves double-stranded DNA at the second phosphodiester bond 3' to a deoxyinosine leaving behind the intact lesion on the nicked DNA. This is Endonuclease V from Roseiflexus castenholzii (strain DSM 13941 / HLO8).